The chain runs to 134 residues: Methylglyoxal synthase (134 aa).

The region spanning 1 to 134 (MHIALIAHDE…DWRDLRRNDE (134 aa)) is the MGS-like domain. Residues H8, K12, 34–37 (TGTT), and 54–55 (SG) contribute to the substrate site. D60 (proton donor/acceptor) is an active-site residue. H87 provides a ligand contact to substrate.

The protein belongs to the methylglyoxal synthase family.

The catalysed reaction is dihydroxyacetone phosphate = methylglyoxal + phosphate. Its function is as follows. Catalyzes the formation of methylglyoxal from dihydroxyacetone phosphate. This Listeria welshimeri serovar 6b (strain ATCC 35897 / DSM 20650 / CCUG 15529 / CIP 8149 / NCTC 11857 / SLCC 5334 / V8) protein is Methylglyoxal synthase.